The primary structure comprises 83 residues: Host transcription reprogramming factor 9 (83 aa).

Residues 1-19 form the signal peptide; the sequence is MQFSKITLAIVLYALGTAA. A C2H2-type zinc finger spans residues 54 to 77; it reads YRCDKCEKEFVKGNDFFNHGGRGH.

It localises to the secreted. It is found in the host nucleus. Probable secreted effector that translocates into the nuclei of host cells to reprogram the expression of targeted genes by binding on effector binding elements in rice. The chain is Host transcription reprogramming factor 9 from Pyricularia oryzae (strain 70-15 / ATCC MYA-4617 / FGSC 8958) (Rice blast fungus).